The sequence spans 648 residues: Replication restart protein PriA (648 aa).

Positions 131–297 (TILNESNKPT…EIGKYQLVTL (167 aa)) constitute a Helicase ATP-binding domain. ATP is bound at residue 144–151 (GVTGSGKT). The short motif at 240-243 (DEEH) is the DEAH box element. The Zn(2+) site is built by Cys358, Cys361, Cys367, Cys370, Cys385, Cys388, Cys398, and Cys401. The Helicase C-terminal domain occupies 393-548 (KIFSSCPECL…SFFANELEIR (156 aa)).

It belongs to the helicase family. PriA subfamily. In terms of assembly, component of the replication restart primosome. Requires Zn(2+) as cofactor.

The catalysed reaction is Couples ATP hydrolysis with the unwinding of duplex DNA by translocating in the 3'-5' direction.. The enzyme catalyses ATP + H2O = ADP + phosphate + H(+). Its function is as follows. Initiates the restart of stalled replication forks, which reloads the replicative helicase on sites other than the origin of replication. Recognizes and binds to abandoned replication forks and remodels them to uncover a helicase loading site. Promotes assembly of the primosome at these replication forks. The chain is Replication restart protein PriA from Rickettsia conorii (strain ATCC VR-613 / Malish 7).